The following is a 492-amino-acid chain: PHO85 cyclin-8 (492 aa).

Disordered regions lie at residues 1–32 (MANDQDPNKSLINDALTRSMSEFYDDDDDNDS), 143–163 (SGSGKLPGRVKSDTATQGTGR), and 223–252 (KVNSNSQIDTDNHSHESGNTTNNETDENES). Polar residues predominate over residues 8 to 20 (NKSLINDALTRSM). A compositionally biased stretch (acidic residues) spans 23-32 (FYDDDDDNDS). Phosphoserine is present on Ser32.

Belongs to the cyclin family. PHO80 subfamily. In terms of assembly, forms a cyclin-CDK complex with PHO85.

The protein resides in the cytoplasm. The protein localises to the nucleus. Functionally, cyclin partner of the cyclin-dependent kinase (CDK) PHO85. Together with cyclin PCL10, negatively controls glycogen accumulation under favorable growth conditions. Involved in phosphorylation and negative regulation of glycogen synthase GSY2. Also has minor GLC8 kinase activity. This is PHO85 cyclin-8 (PCL8) from Saccharomyces cerevisiae (strain ATCC 204508 / S288c) (Baker's yeast).